The primary structure comprises 248 residues: MSEVRTGFLTMTTIILISIGLTMMGTGLYQKTTMSSCIRETSSQFTLLGLLLLLIPQIGLYGICCRSKRLFNFFFYGMVVLIIIVSYYSIKCSIYNTTFGIAKNPAKDNRTVPQLLGRLVSKEKFEKVTYCIIHKHDCNYNASKNSNVWKYCCAQPVGCGTITMFDKPGEWSWKHQYERNQVPEECSYEYCLDCRGCQLSILKAIVHQWKYLSMFAYPALVLSCISLAIAWSLKETIHENEDYRGSYS.

Residues 1–7 (MSEVRTG) are Cytoplasmic-facing. A helical membrane pass occupies residues 8 to 28 (FLTMTTIILISIGLTMMGTGL). Topologically, residues 29 to 44 (YQKTTMSSCIRETSSQ) are extracellular. The helical transmembrane segment at 45-65 (FTLLGLLLLLIPQIGLYGICC) threads the bilayer. Residues 66 to 69 (RSKR) lie on the Cytoplasmic side of the membrane. Residues 70–90 (LFNFFFYGMVVLIIIVSYYSI) traverse the membrane as a helical segment. Over 91 to 210 (KCSIYNTTFG…ILKAIVHQWK (120 aa)) the chain is Extracellular. 3 N-linked (GlcNAc...) asparagine glycosylation sites follow: Asn-96, Asn-109, and Asn-141. Residues 211-231 (YLSMFAYPALVLSCISLAIAW) form a helical membrane-spanning segment. Topologically, residues 232 to 248 (SLKETIHENEDYRGSYS) are cytoplasmic.

This sequence belongs to the tetraspanin (TM4SF) family.

The protein resides in the membrane. May be involved in the regulation of cell differentiation. This chain is Tetraspanin-17 (TET17), found in Arabidopsis thaliana (Mouse-ear cress).